A 270-amino-acid polypeptide reads, in one-letter code: Glutamate racemase (270 aa).

Substrate contacts are provided by residues 14–15 (DS) and 46–47 (YG). The Proton donor/acceptor role is filled by cysteine 77. 78–79 (NT) contributes to the substrate binding site. The Proton donor/acceptor role is filled by cysteine 186. Substrate is bound at residue 187 to 188 (TH).

The protein belongs to the aspartate/glutamate racemases family.

The catalysed reaction is L-glutamate = D-glutamate. Its pathway is cell wall biogenesis; peptidoglycan biosynthesis. Functionally, provides the (R)-glutamate required for cell wall biosynthesis. The polypeptide is Glutamate racemase (Trichodesmium erythraeum (strain IMS101)).